The following is a 333-amino-acid chain: MSLDIDQIALHQLVKRDEQTLDVVLRDSLLPANAVVEEMMAELHRVYSAKSKAYGLFNEQSELADALKRSRKGDEDFLSFSRAATGRLRDELAKYPFAEGGVVLFCQYRYLAVEYLLISVLSSCNSMRVNEQLDLSTTHYLDINRADIVARIDLTEWENNPESTRYLTFLKGRVGRKVSDFFMDFLAASEGLDTKAQNRGLLQAVADYCADAELGKNERQAYRQQVYSYCNEQLQAGEEIALQELAQELPKLGEKDFQQFSVEQGYALEESFPADRGTLRQLTKFAGSGGGLSINFDALLLGERIFWDAATDTLTIKGTPPNLRDQLQRNSGK.

The protein belongs to the YejK family.

It is found in the cytoplasm. Its subcellular location is the nucleoid. The protein is Nucleoid-associated protein YE1421 of Yersinia enterocolitica serotype O:8 / biotype 1B (strain NCTC 13174 / 8081).